The following is an 84-amino-acid chain: Minor capsid protein P30 (84 aa).

Dimer.

The protein localises to the virion. In terms of biological role, minor capsid protein essential for stable capsid assembly of complete particles. In Enterobacteria phage PRD1 (Bacteriophage PRD1), this protein is Minor capsid protein P30 (XXX).